The sequence spans 228 residues: Aspartyl protease inhibitor (228 aa).

Residues 1 to 15 (MKLIELCVLCAIAFA) form the signal peptide. Basic and acidic residues predominate over residues 88-112 (KLKSRMSGKKEEKAAVTSTKDEDLP). A disordered region spans residues 88 to 119 (KLKSRMSGKKEEKAAVTSTKDEDLPKPPQKPS). Cys134 and Cys224 form a disulfide bridge.

This sequence belongs to the protease inhibitor I33 family.

The protein localises to the secreted. In terms of biological role, aspartyl protease inhibitor. The polypeptide is Aspartyl protease inhibitor (Trichostrongylus colubriformis (Black scour worm)).